Consider the following 912-residue polypeptide: MFAPLLKKLFGSKNEREVKRMLKTVQLVNAFEEKMVALSDDQLRAKTAEFKDRIAKGETLDQLLPEAFAVAREAGKRVMGMRHFDVQLIGGMTLHEGKIAEMRTGEGKTLVGTLGVYLNALSGKGVHVVTVNDYLARRDANWMRPLYEFLGLSVGIVTPFQPPEEKRAAYAADITYGTNNEFGFDYLRDNMAFSMEEKFQRELNFAVIDEVDSILIDEARTPLIISGQAEDSSRLYIEINKLIPKLKLHVEEVEGEVTQEGHYTVDEKTRQVELNEAGHQFIEDQLTSIGLLAEGESLYSAHNLSLLTHVYAGLRAHKLFHRNVEYIVQDGQVVLVDEHTGRTMPGRRLSEGLHQAIEAKENLNIQAESQTLASTTFQNYFRLYDKLSGMTGTADTEAFEFHQIYGLQVVVIPTNKPLARKDYNDLVFLTAEEKYAAIVNDIKESMAAGRPVLVGTATIETSEHMSALLEKEGIEHKVLNAKFHEKEAEIIAQAGRPGALTIATNMAGRGTDILLGGNWEVEVASLENPTPEQIAQIKADWQKRHQQVLESGGLQVIASERHESRRIDNQLRGRAGRQGDAGSSRFYLSLEDSLMRIFASDRVKNFMKALGMQSGEAIEHRMVTNAIEKAQRKVEGRNFDIRKQLLEFDDVNNEQRKVIYHMRNTLLAADNIGETIADFRQDVLNATVSAHIPPQSLPEQWDVAGLEASIASDFGVKLPIQQWLDEDDHLYEETLREKLMNELIAAYNEKEDQAGAEALRSFEKQIVLRVLDDLWKDHLSTMDHLRHGIHLRGYAQKNPKQEYKRESFTLFSELLDSIKRDSIRVLSHVQVRREDPAEEEQRLRQEAEALAARMQFEHAEAPGLEAQPELVGEEVDVALAAAPVRNEQKLGRNELCYCGSGKKFKHCHGQIQ.

Residues Gln87, 105–109, and Asp512 each bind ATP; that span reads GEGKT. Zn(2+)-binding residues include Cys896, Cys898, Cys907, and His908.

This sequence belongs to the SecA family. In terms of assembly, monomer and homodimer. Part of the essential Sec protein translocation apparatus which comprises SecA, SecYEG and auxiliary proteins SecDF-YajC and YidC. Zn(2+) is required as a cofactor.

It is found in the cell inner membrane. The protein localises to the cytoplasm. It catalyses the reaction ATP + H2O + cellular proteinSide 1 = ADP + phosphate + cellular proteinSide 2.. Its function is as follows. Part of the Sec protein translocase complex. Interacts with the SecYEG preprotein conducting channel. Has a central role in coupling the hydrolysis of ATP to the transfer of proteins into and across the cell membrane, serving both as a receptor for the preprotein-SecB complex and as an ATP-driven molecular motor driving the stepwise translocation of polypeptide chains across the membrane. The protein is Protein translocase subunit SecA of Pseudomonas fluorescens (strain Pf0-1).